The primary structure comprises 257 residues: Envelope glycoprotein (257 aa).

At F1 to L229 the chain is on the extracellular side. 3 N-linked (GlcNAc...) asparagine; by host glycosylation sites follow: N15, N58, and N68. The interval G95 to L115 is fusion peptide. A coiled-coil region spans residues A112 to L162. N130 is a glycosylation site (N-linked (GlcNAc...) asparagine; by host). The segment at L151–G167 is immunosuppression. N-linked (GlcNAc...) asparagine; by host glycosylation is present at N178. Residues S180–W210 are a coiled coil. A helical transmembrane segment spans residues L230 to V250. A lipid anchor (S-palmitoyl cysteine; by host) is attached at C245. Over S251 to M257 the chain is Cytoplasmic.

In terms of assembly, the mature envelope protein (Env) consists of a trimer of SU-TM heterodimers attached by noncovalent interactions or by a labile interchain disulfide bond. In terms of processing, specific enzymatic cleavages in vivo yield mature proteins. Envelope glycoproteins are synthesized as an inactive precursor that is N-glycosylated and processed likely by host cell furin or by a furin-like protease in the Golgi to yield the mature SU and TM proteins. The cleavage site between SU and TM requires the minimal sequence [KR]-X-[KR]-R. The transmembrane protein is palmitoylated.

It is found in the virion membrane. It localises to the host cell membrane. The surface protein (SU) attaches the virus to the host cell by binding to its receptor. This interaction triggers the refolding of the transmembrane protein (TM) and is thought to activate its fusogenic potential by unmasking its fusion peptide. Fusion occurs at the host cell plasma membrane. Its function is as follows. The transmembrane protein (TM) acts as a class I viral fusion protein. Under the current model, the protein has at least 3 conformational states: pre-fusion native state, pre-hairpin intermediate state, and post-fusion hairpin state. During viral and target cell membrane fusion, the coiled coil regions (heptad repeats) assume a trimer-of-hairpins structure, positioning the fusion peptide in close proximity to the C-terminal region of the ectodomain. The formation of this structure appears to drive apposition and subsequent fusion of viral and target cell membranes. Membranes fusion leads to delivery of the nucleocapsid into the cytoplasm. The sequence is that of Envelope glycoprotein (env) from Galliformes.